Consider the following 413-residue polypeptide: Gamma-glutamyl phosphate reductase (413 aa).

Belongs to the gamma-glutamyl phosphate reductase family.

The protein localises to the cytoplasm. It carries out the reaction L-glutamate 5-semialdehyde + phosphate + NADP(+) = L-glutamyl 5-phosphate + NADPH + H(+). It participates in amino-acid biosynthesis; L-proline biosynthesis; L-glutamate 5-semialdehyde from L-glutamate: step 2/2. In terms of biological role, catalyzes the NADPH-dependent reduction of L-glutamate 5-phosphate into L-glutamate 5-semialdehyde and phosphate. The product spontaneously undergoes cyclization to form 1-pyrroline-5-carboxylate. The sequence is that of Gamma-glutamyl phosphate reductase from Lactococcus lactis subsp. cremoris (strain MG1363).